The primary structure comprises 143 residues: Holo-[acyl-carrier-protein] synthase (143 aa).

Positions 8 and 62 each coordinate Mg(2+).

It belongs to the P-Pant transferase superfamily. AcpS family. Mg(2+) is required as a cofactor.

The protein localises to the cytoplasm. It carries out the reaction apo-[ACP] + CoA = holo-[ACP] + adenosine 3',5'-bisphosphate + H(+). In terms of biological role, transfers the 4'-phosphopantetheine moiety from coenzyme A to a Ser of acyl-carrier-protein. This chain is Holo-[acyl-carrier-protein] synthase, found in Cupriavidus metallidurans (strain ATCC 43123 / DSM 2839 / NBRC 102507 / CH34) (Ralstonia metallidurans).